Consider the following 659-residue polypeptide: Polyamine transporter 4 (659 aa).

2 stretches are compositionally biased toward polar residues: residues 1-20 and 28-45; these read MPSSLTKTESNSDPRTNIQQ and NVTNSGNLDSTSSSTGSI. Residues 1 to 81 are disordered; the sequence is MPSSLTKTES…LDWDGPDDPD (81 aa). Topologically, residues 1 to 99 are cytoplasmic; that stretch reads MPSSLTKTES…KKWYTTMTSA (99 aa). Residues 100–120 form a helical membrane-spanning segment; the sequence is FLCLVVTMGSSLYVSSVPELV. Residues 121-128 are Extracellular-facing; that stretch reads ERYHVSQT. Residues 129-149 form a helical membrane-spanning segment; sequence LALAGLTFYLLGLSTVIGAPL. The Cytoplasmic segment spans residues 150 to 157; sequence SEVFGRKP. The chain crosses the membrane as a helical span at residues 158–178; it reads VYLFSLPVSMLFTMGVGLSNG. Residues 179–187 lie on the Extracellular side of the membrane; the sequence is HMRIILPLR. A helical membrane pass occupies residues 188 to 208; the sequence is FLSGVFASPALSVGSGTILDI. Topologically, residues 209–215 are cytoplasmic; it reads FDVDQVS. Residues 216-236 traverse the membrane as a helical segment; the sequence is VAMTYFVLSPFLGPVLSPIMA. Over 237 to 246 the chain is Extracellular; sequence GFATEAKGWR. The helical transmembrane segment at 247–267 threads the bilayer; the sequence is WSEWIQLIAGGLILPFIALMP. Over 268-316 the chain is Cytoplasmic; the sequence is ETHKGIILRKRAKKRNIALKKFSREAQKEFLKTTVTITILRPLKMLVVE. Residues 317–337 form a helical membrane-spanning segment; that stretch reads PIVFVFSVYVAFIFAILFGFF. Over 338–355 the chain is Extracellular; sequence EAYAVIYRGVYHMSMGIS. A helical transmembrane segment spans residues 356 to 376; that stretch reads GLPFIGIGVGLWIGAFFYLYI. Over 377 to 423 the chain is Cytoplasmic; it reads DRKYLFPKPPAGTQPLTEKERTSKRTTPYRGARDAETGELLPVVPEK. A disordered region spans residues 387-408; the sequence is AGTQPLTEKERTSKRTTPYRGA. The helical transmembrane segment at 424 to 444 threads the bilayer; sequence FLIACKFGSVALPIGLFWQAW. Residues 445–456 lie on the Extracellular side of the membrane; the sequence is TARSDVHWMAPV. Residues 457 to 477 traverse the membrane as a helical segment; sequence AAGVPFGFGLILIFFSVLMYF. The Cytoplasmic portion of the chain corresponds to 478–486; that stretch reads STCYPPLTV. The helical transmembrane segment at 487-509 threads the bilayer; the sequence is ASCLAANNLLRYVMSSVFPLFTI. The Extracellular portion of the chain corresponds to 510-518; sequence QMYTKMKIK. Residues 519–539 traverse the membrane as a helical segment; sequence WASTLFALVCVVMIPIPWVFE. The Cytoplasmic portion of the chain corresponds to 540–659; the sequence is KWGSKLRHKS…MATDASARMV (120 aa). A compositionally biased stretch (basic and acidic residues) spans 587–602; sequence METDPSTREKPGERLS. A disordered region spans residues 587 to 631; sequence METDPSTREKPGERLSLRRTHTQPVPASFDREDGQHAQNRNEPIS. A phosphothreonine mark is found at T589, T606, and T608. A compositionally biased stretch (polar residues) spans 622–631; sequence HAQNRNEPIS. Residues S633 and S646 each carry the phosphoserine modification.

This sequence belongs to the major facilitator superfamily. DHA1 family. Polyamines/proton antiporter (TC 2.A.1.2.16) subfamily.

The protein resides in the cell membrane. In terms of biological role, cell membrane polyamine/proton antiporter, involved in the detoxification of excess polyamines in the cytoplasm. Recognizes spermidine, spermine and the antimalarial drug quinidine, but not quinine, chloroquine and mefloquine. In Saccharomyces cerevisiae (strain ATCC 204508 / S288c) (Baker's yeast), this protein is Polyamine transporter 4 (TPO4).